A 620-amino-acid chain; its full sequence is Dihydroxy-acid dehydratase (620 aa).

Aspartate 82 serves as a coordination point for Mg(2+). Cysteine 123 contacts [2Fe-2S] cluster. Positions 124 and 125 each coordinate Mg(2+). At lysine 125 the chain carries N6-carboxylysine. Cysteine 197 contributes to the [2Fe-2S] cluster binding site. Glutamate 493 contacts Mg(2+). The active-site Proton acceptor is serine 519.

It belongs to the IlvD/Edd family. Homodimer. [2Fe-2S] cluster is required as a cofactor. It depends on Mg(2+) as a cofactor.

It carries out the reaction (2R)-2,3-dihydroxy-3-methylbutanoate = 3-methyl-2-oxobutanoate + H2O. The catalysed reaction is (2R,3R)-2,3-dihydroxy-3-methylpentanoate = (S)-3-methyl-2-oxopentanoate + H2O. It functions in the pathway amino-acid biosynthesis; L-isoleucine biosynthesis; L-isoleucine from 2-oxobutanoate: step 3/4. The protein operates within amino-acid biosynthesis; L-valine biosynthesis; L-valine from pyruvate: step 3/4. Functions in the biosynthesis of branched-chain amino acids. Catalyzes the dehydration of (2R,3R)-2,3-dihydroxy-3-methylpentanoate (2,3-dihydroxy-3-methylvalerate) into 2-oxo-3-methylpentanoate (2-oxo-3-methylvalerate) and of (2R)-2,3-dihydroxy-3-methylbutanoate (2,3-dihydroxyisovalerate) into 2-oxo-3-methylbutanoate (2-oxoisovalerate), the penultimate precursor to L-isoleucine and L-valine, respectively. The polypeptide is Dihydroxy-acid dehydratase (Bifidobacterium longum (strain NCC 2705)).